The primary structure comprises 146 residues: Transcriptional repressor NrdR (146 aa).

Residues 3 to 34 fold into a zinc finger; it reads CPFCQNPDTKVIDTRISDDGHSIRRRRVCPKC. Residues 46–136 form the ATP-cone domain; it reads LLVTKRSGGV…VYQNFAGLED (91 aa).

This sequence belongs to the NrdR family. It depends on Zn(2+) as a cofactor.

Negatively regulates transcription of bacterial ribonucleotide reductase nrd genes and operons by binding to NrdR-boxes. The protein is Transcriptional repressor NrdR of Bifidobacterium longum (strain NCC 2705).